The primary structure comprises 239 residues: Ribonuclease PH (239 aa).

Residues Arg87 and Gly125 to Arg127 contribute to the phosphate site.

This sequence belongs to the RNase PH family. Homohexameric ring arranged as a trimer of dimers.

The enzyme catalyses tRNA(n+1) + phosphate = tRNA(n) + a ribonucleoside 5'-diphosphate. In terms of biological role, phosphorolytic 3'-5' exoribonuclease that plays an important role in tRNA 3'-end maturation. Removes nucleotide residues following the 3'-CCA terminus of tRNAs; can also add nucleotides to the ends of RNA molecules by using nucleoside diphosphates as substrates, but this may not be physiologically important. Probably plays a role in initiation of 16S rRNA degradation (leading to ribosome degradation) during starvation. The protein is Ribonuclease PH of Cellvibrio japonicus (strain Ueda107) (Pseudomonas fluorescens subsp. cellulosa).